The chain runs to 123 residues: uncharacterized protein (123 aa).

The protein to M.tuberculosis Rv0477.

This is an uncharacterized protein from Mycobacterium leprae (strain TN).